A 702-amino-acid chain; its full sequence is Pheromone-processing carboxypeptidase KEX1 (702 aa).

The first 19 residues, 1–19 (MKLILSTLIVFIHTLLVSA), serve as a signal peptide directing secretion. Residues 20–555 (LPTKEGSDPN…SDSTSSKFTR (536 aa)) are Lumenal-facing. N-linked (GlcNAc...) asparagine glycosylation is found at Asn-85 and Asn-122. Residues Ser-184 and Asp-394 contribute to the active site. N-linked (GlcNAc...) asparagine glycans are attached at residues Asn-441 and Asn-449. His-452 is a catalytic residue. The segment at 491 to 531 (SRKESDASANGEENAGSDKVPGDSPSQTMDPMISSSTASSS) is disordered. Residues 556-576 (LIQLAVILVIFWGVYVLYASY) form a helical membrane-spanning segment. The Cytoplasmic portion of the chain corresponds to 577–702 (KSRPSSIIKK…THNQKQKPMN (126 aa)). Disordered regions lie at residues 582–603 (SIIKKPTNNTSNVTRSSAGKKK) and 659–702 (DIEL…KPMN). Polar residues-rich tracts occupy residues 587–598 (PTNNTSNVTRSS) and 692–702 (ATHNQKQKPMN).

This sequence belongs to the peptidase S10 family.

It is found in the golgi apparatus. The protein resides in the trans-Golgi network membrane. It carries out the reaction Preferential release of a C-terminal arginine or lysine residue.. Functionally, protease with a carboxypeptidase B-like function involved in the C-terminal processing of the lysine and arginine residues from protein precursors. Promotes cell fusion and is involved in the programmed cell death. This Candida albicans (strain WO-1) (Yeast) protein is Pheromone-processing carboxypeptidase KEX1 (KEX1).